The sequence spans 227 residues: MAYPFQLGLQDATSPIMEELTNFHDHTLMIVFLISSLVLYIISLMLTTKLTHTSTMDAQEVETIWTILPAVILILIALPSLRILYMMDEINNPVLTVKTMGHQWYWSYEYTDYEDLCFDSYMIPTNDLKPGELRLLEVDNRVVLPMELPIRMLISSEDVLHSWAVPSLGLKTDAIPGRLNQATVTSNRPGLFYGQCSEICGSNHSFMPIVLEMVPLKYFENWSASMI.

Residues 1–14 (MAYPFQLGLQDATS) are Mitochondrial intermembrane-facing. The chain crosses the membrane as a helical span at residues 15-45 (PIMEELTNFHDHTLMIVFLISSLVLYIISLM). Topologically, residues 46-59 (LTTKLTHTSTMDAQ) are mitochondrial matrix. The helical transmembrane segment at 60–87 (EVETIWTILPAVILILIALPSLRILYMM) threads the bilayer. At 88–227 (DEINNPVLTV…YFENWSASMI (140 aa)) the chain is on the mitochondrial intermembrane side. 6 residues coordinate Cu cation: histidine 161, cysteine 196, glutamate 198, cysteine 200, histidine 204, and methionine 207. Glutamate 198 serves as a coordination point for Mg(2+). Position 218 is a phosphotyrosine (tyrosine 218).

The protein belongs to the cytochrome c oxidase subunit 2 family. Component of the cytochrome c oxidase (complex IV, CIV), a multisubunit enzyme composed of 14 subunits. The complex is composed of a catalytic core of 3 subunits MT-CO1, MT-CO2 and MT-CO3, encoded in the mitochondrial DNA, and 11 supernumerary subunits COX4I, COX5A, COX5B, COX6A, COX6B, COX6C, COX7A, COX7B, COX7C, COX8 and NDUFA4, which are encoded in the nuclear genome. The complex exists as a monomer or a dimer and forms supercomplexes (SCs) in the inner mitochondrial membrane with NADH-ubiquinone oxidoreductase (complex I, CI) and ubiquinol-cytochrome c oxidoreductase (cytochrome b-c1 complex, complex III, CIII), resulting in different assemblies (supercomplex SCI(1)III(2)IV(1) and megacomplex MCI(2)III(2)IV(2)). Found in a complex with TMEM177, COA6, COX18, COX20, SCO1 and SCO2. Interacts with TMEM177 in a COX20-dependent manner. Interacts with COX20. Interacts with COX16. The cofactor is Cu cation.

It is found in the mitochondrion inner membrane. The enzyme catalyses 4 Fe(II)-[cytochrome c] + O2 + 8 H(+)(in) = 4 Fe(III)-[cytochrome c] + 2 H2O + 4 H(+)(out). Functionally, component of the cytochrome c oxidase, the last enzyme in the mitochondrial electron transport chain which drives oxidative phosphorylation. The respiratory chain contains 3 multisubunit complexes succinate dehydrogenase (complex II, CII), ubiquinol-cytochrome c oxidoreductase (cytochrome b-c1 complex, complex III, CIII) and cytochrome c oxidase (complex IV, CIV), that cooperate to transfer electrons derived from NADH and succinate to molecular oxygen, creating an electrochemical gradient over the inner membrane that drives transmembrane transport and the ATP synthase. Cytochrome c oxidase is the component of the respiratory chain that catalyzes the reduction of oxygen to water. Electrons originating from reduced cytochrome c in the intermembrane space (IMS) are transferred via the dinuclear copper A center (CU(A)) of subunit 2 and heme A of subunit 1 to the active site in subunit 1, a binuclear center (BNC) formed by heme A3 and copper B (CU(B)). The BNC reduces molecular oxygen to 2 water molecules using 4 electrons from cytochrome c in the IMS and 4 protons from the mitochondrial matrix. The sequence is that of Cytochrome c oxidase subunit 2 from Rattus norvegicus (Rat).